The primary structure comprises 82 residues: MSKSQINLQDAFLNQVRKDKIPVTVFLVNGFQIKGMVRGFDNFTVIIEVDQKQQLVYKHAISTVAPLRPISMLNLEAKSDDD.

The Sm domain maps to 10–70; that stretch reads DAFLNQVRKD…ISTVAPLRPI (61 aa).

Belongs to the Hfq family. In terms of assembly, homohexamer.

Its function is as follows. RNA chaperone that binds small regulatory RNA (sRNAs) and mRNAs to facilitate mRNA translational regulation in response to envelope stress, environmental stress and changes in metabolite concentrations. Also binds with high specificity to tRNAs. This chain is RNA-binding protein Hfq, found in Syntrophomonas wolfei subsp. wolfei (strain DSM 2245B / Goettingen).